A 326-amino-acid polypeptide reads, in one-letter code: tRNA-cytidine(32) 2-sulfurtransferase (326 aa).

A PP-loop motif motif is present at residues 63-68; the sequence is SGGKDS. Residues C138, C141, and C229 each coordinate [4Fe-4S] cluster.

The protein belongs to the TtcA family. Homodimer. Mg(2+) is required as a cofactor. The cofactor is [4Fe-4S] cluster.

Its subcellular location is the cytoplasm. The catalysed reaction is cytidine(32) in tRNA + S-sulfanyl-L-cysteinyl-[cysteine desulfurase] + AH2 + ATP = 2-thiocytidine(32) in tRNA + L-cysteinyl-[cysteine desulfurase] + A + AMP + diphosphate + H(+). The protein operates within tRNA modification. Functionally, catalyzes the ATP-dependent 2-thiolation of cytidine in position 32 of tRNA, to form 2-thiocytidine (s(2)C32). The sulfur atoms are provided by the cysteine/cysteine desulfurase (IscS) system. The polypeptide is tRNA-cytidine(32) 2-sulfurtransferase (Leptothrix cholodnii (strain ATCC 51168 / LMG 8142 / SP-6) (Leptothrix discophora (strain SP-6))).